The chain runs to 2285 residues: AT-rich interactive domain-containing protein 1A (2285 aa).

The segment covering 1 to 14 (MAAQVAPAAASSLG) has biased composition (low complexity). Disordered stretches follow at residues 1–820 (MAAQ…ALPN) and 978–1005 (ATKM…TTTN). Ala-2 is modified (N-acetylalanine). The segment covering 23–35 (ELKKAEQQQREEA) has biased composition (basic and acidic residues). A phosphoserine mark is found at Ser-58 and Ser-79. Composition is skewed to gly residues over residues 79-95 (SNGG…GGPG) and 121-130 (PGGGGGGSSD). Low complexity-rich tracts occupy residues 131–142 (GVGAPPHSAAAA), 212–221 (YNSYYPNRSA), and 228–265 (AYAL…SSSS). Ser-233 carries the post-translational modification Phosphoserine. Residues 273-286 (AMGGGGPSAAGGGT) are compositionally biased toward gly residues. Phosphothreonine is present on Thr-286. Residues 295–299 (LNQLL) carry the LXXLL motif. Polar residues predominate over residues 295-306 (LNQLLTSPSSAR). Residue Ser-301 is modified to Phosphoserine. Gly residues predominate over residues 310–327 (GYPGGDYSGGPQDGGAGK). The span at 338–353 (GAAAAAAAAAAASGGA) shows a compositional bias: low complexity. Phosphoserine occurs at positions 363 and 382. Low complexity predominate over residues 400 to 425 (PYSQQQGPPSGPQQGHGYPGQPYGSQ). Asymmetric dimethylarginine is present on Arg-429. Low complexity-rich tracts occupy residues 447 to 457 (YTQQIPPYGQQ), 465 to 546 (QGQT…QHPQ), and 553 to 595 (QPQA…YSQQ). Ser-604 carries the post-translational modification Phosphoserine. The span at 610 to 621 (SQASSAPSMTSS) shows a compositional bias: low complexity. Positions 628 to 637 (MNLSLQSRPS) are enriched in polar residues. The span at 658–674 (SPGVSTSGISSSQGEQS) shows a compositional bias: low complexity. A compositionally biased stretch (polar residues) spans 675–685 (NPAQSPFSPHT). A phosphoserine mark is found at Ser-696, Ser-698, Ser-702, Ser-730, Ser-764, and Ser-772. Polar residues-rich tracts occupy residues 730–747 (SGQS…SSIA) and 755–793 (RNPQ…QNSM). Residues 797–807 (GPQGGQYGPQG) are compositionally biased toward gly residues. Residues 808–820 (GYPRQPNYNALPN) are compositionally biased toward low complexity. The ARID domain occupies 1017 to 1108 (EPERKMWVDR…CLYAFECKIE (92 aa)). Disordered stretches follow at residues 1113–1483 (PPPD…MMGG) and 1539–1603 (ANHE…SPSK). Residues 1141–1154 (MQGPQTPQSTSSSM) are compositionally biased toward low complexity. Over residues 1162-1177 (PPTPASTPHSQIPPLP) the composition is skewed to pro residues. At Ser-1184 the chain carries Phosphoserine. Polar residues predominate over residues 1194–1219 (GSDSTFQKRNSMTPNPGYQPSMNTSD). Ser-1235 is modified (phosphoserine). Arg-1276 carries the omega-N-methylarginine modification. Polar residues-rich tracts occupy residues 1299-1315 (NMST…SNPD) and 1339-1356 (YGNQ…PFPS). Residues 1357-1367 (QQTTMYQQQQQ) are compositionally biased toward low complexity. Positions 1368–1387 (NYKRPMDGTYGPPAKRHEGE) match the Nuclear localization signal motif. Positions 1396 to 1425 (GQGQPQQQQLPPAQPQPASQQQAAQPSPQQ) are enriched in low complexity. The segment covering 1468 to 1477 (PGTNAQQNMP) has biased composition (polar residues). Residues 1554-1577 (PYGPSAPVPPMTRPPPSNYQPPPS) are compositionally biased toward pro residues. Residue Ser-1604 is modified to Phosphoserine. Lys-1612 carries the N6-acetyllysine modification. The LXXLL motif lies at 1709-1713 (LPGLL). Disordered regions lie at residues 1747–1774 (PGRF…PKLE) and 1859–1907 (FESK…EKRI). Phosphoserine is present on residues Ser-1751 and Ser-1754. The segment covering 1761–1774 (GGEEEEELLGPKLE) has biased composition (acidic residues). Over residues 1886–1895 (EGTPGTTDQE) the composition is skewed to low complexity. Phosphothreonine is present on Thr-1888. The residue at position 1905 (Lys-1905) is an N6-acetyllysine. Phosphoserine is present on residues Ser-1929 and Ser-1944. Short sequence motifs (LXXLL) lie at residues 1967-1971 (LCTLL) and 2085-2089 (LDGLL).

As to quaternary structure, component of SWI/SNF chromatin remodeling complexes, in some of which it can be mutually exclusive with ARID1B/BAF250B. The canonical complex contains a catalytic subunit (either SMARCA4/BRG1/BAF190A or SMARCA2/BRM/BAF190B) and at least SMARCE1, ACTL6A/BAF53, SMARCC1/BAF155, SMARCC2/BAF170, and SMARCB1/SNF5/BAF47. Other subunits specific to each of the complexes may also be present permitting several possible combinations developmentally and tissue specific. Component of the BAF (SWI/SNF-A) complex, which includes at least actin (ACTB), ARID1A/BAF250A, ARID1B/BAF250B, SMARCA2/BRM, SMARCA4/BRG1/BAF190A, ACTL6A/BAF53, ACTL6B/BAF53B, SMARCE1/BAF57, SMARCC1/BAF155, SMARCC2/BAF170, SMARCB1/SNF5/INI1, and one or more SMARCD1/BAF60A, SMARCD2/BAF60B, or SMARCD3/BAF60C. In muscle cells, the BAF complex also contains DPF3. Component of neural progenitors-specific chromatin remodeling complex (npBAF complex) composed of at least, ARID1A/BAF250A or ARID1B/BAF250B, SMARCD1/BAF60A, SMARCD3/BAF60C, SMARCA2/BRM/BAF190B, SMARCA4/BRG1/BAF190A, SMARCB1/BAF47, SMARCC1/BAF155, SMARCE1/BAF57, SMARCC2/BAF170, PHF10/BAF45A, ACTL6A/BAF53A and actin. Component of neuron-specific chromatin remodeling complex (nBAF complex) composed of at least, ARID1A/BAF250A or ARID1B/BAF250B, SMARCD1/BAF60A, SMARCD3/BAF60C, SMARCA2/BRM/BAF190B, SMARCA4/BRG1/BAF190A, SMARCB1/BAF47, SMARCC1/BAF155, SMARCE1/BAF57, SMARCC2/BAF170, DPF1/BAF45B, DPF3/BAF45C, ACTL6B/BAF53B and actin. Component of a SWI/SNF-like EBAFa complex, at least composed of SMARCA4/BRG1/BAF190A, SMARCB1/BAF47/SNF5, ACTL6A/BAF53A, SMARCE1/BAF57, SMARCD1/BAF60A, SMARCC1/BAF155, SMARCC2/BAF170, BAF250A and MLLT1/ENL. Interacts through its C-terminus with SMARCA2/BRM/BAF190B and SMARCA4/BRG1/BAF190A. Interacts with SMARCC1/BAF155. Interacts with FOS, FOSB isoform 1 and 2, FOSL1 and FOSL2. In terms of tissue distribution, highly expressed in spleen, thymus, prostate, testis, ovary, small intestine, colon, and PBL, and at a much lower level in heart, brain, placenta, lung, liver, skeletal muscle, kidney, and pancreas.

Its subcellular location is the nucleus. Its function is as follows. Involved in transcriptional activation and repression of select genes by chromatin remodeling (alteration of DNA-nucleosome topology). Component of SWI/SNF chromatin remodeling complexes that carry out key enzymatic activities, changing chromatin structure by altering DNA-histone contacts within a nucleosome in an ATP-dependent manner. Binds DNA non-specifically. Belongs to the neural progenitors-specific chromatin remodeling complex (npBAF complex) and the neuron-specific chromatin remodeling complex (nBAF complex). During neural development a switch from a stem/progenitor to a postmitotic chromatin remodeling mechanism occurs as neurons exit the cell cycle and become committed to their adult state. The transition from proliferating neural stem/progenitor cells to postmitotic neurons requires a switch in subunit composition of the npBAF and nBAF complexes. As neural progenitors exit mitosis and differentiate into neurons, npBAF complexes which contain ACTL6A/BAF53A and PHF10/BAF45A, are exchanged for homologous alternative ACTL6B/BAF53B and DPF1/BAF45B or DPF3/BAF45C subunits in neuron-specific complexes (nBAF). The npBAF complex is essential for the self-renewal/proliferative capacity of the multipotent neural stem cells. The nBAF complex along with CREST plays a role regulating the activity of genes essential for dendrite growth. The polypeptide is AT-rich interactive domain-containing protein 1A (ARID1A) (Homo sapiens (Human)).